The following is a 1464-amino-acid chain: Bridge-like lipid transfer protein family member 3B (1464 aa).

The Chorein N-terminal domain occupies 3-94 (GIIKKQILKH…DKVIMEMSTC (92 aa)). Disordered regions lie at residues 267–297 (STEQ…TQTS) and 409–436 (DHNV…YPLK). Over residues 278-297 (PTQSSTVVASAQQVKTTQTS) the composition is skewed to polar residues. S414, S418, S774, S935, and S1009 each carry phosphoserine. Disordered regions lie at residues 1066 to 1089 (SKEE…PKER), 1164 to 1183 (LQNY…EGAQ), and 1392 to 1413 (QRSV…QSAN). Polar residues-rich tracts occupy residues 1164 to 1182 (LQNY…SEGA) and 1394 to 1413 (SVTQ…QSAN). Residues 1418-1456 (SFDFTREQLMEENESLKQELAKAKMALAEAHLEKDALLH) are a coiled coil.

As to quaternary structure, monomer. Homodimer (via N-terminus). Associates with the Golgi-associated retrograde protein (GARP) complex. Interacts with GARP complex component VPS52. Interacts (via C-terminal coiled-coil domain) with STX6.

It localises to the cytoplasm. The protein localises to the cytosol. The protein resides in the early endosome. Tube-forming lipid transport protein which mediates the transfer of lipids between membranes at organelle contact sites. Required for retrograde traffic of vesicle clusters in the early endocytic pathway to the Golgi complex. This is Bridge-like lipid transfer protein family member 3B from Homo sapiens (Human).